A 176-amino-acid polypeptide reads, in one-letter code: Cystatin-related protein 1 (176 aa).

The signal sequence occupies residues 1–26; the sequence is MCKTLHGTLLLLAIFVLFLNFSHATA. A propeptide spanning residues 27-31 is cleaved from the precursor; sequence KRTRR. N-linked (GlcNAc...) asparagine glycosylation is present at Asn-71. 2 disulfide bridges follow: Cys-129–Cys-139 and Cys-153–Cys-173.

Belongs to the cystatin family. As to expression, prostate and lacrimal gland.

This chain is Cystatin-related protein 1 (Andpro), found in Rattus norvegicus (Rat).